A 440-amino-acid chain; its full sequence is Thymidine phosphorylase (440 aa).

Belongs to the thymidine/pyrimidine-nucleoside phosphorylase family. As to quaternary structure, homodimer.

It carries out the reaction thymidine + phosphate = 2-deoxy-alpha-D-ribose 1-phosphate + thymine. The protein operates within pyrimidine metabolism; dTMP biosynthesis via salvage pathway; dTMP from thymine: step 1/2. In terms of biological role, the enzymes which catalyze the reversible phosphorolysis of pyrimidine nucleosides are involved in the degradation of these compounds and in their utilization as carbon and energy sources, or in the rescue of pyrimidine bases for nucleotide synthesis. The chain is Thymidine phosphorylase from Proteus mirabilis (strain HI4320).